The sequence spans 164 residues: Protein-export protein SecB (164 aa).

The protein belongs to the SecB family. Homotetramer, a dimer of dimers. One homotetramer interacts with 1 SecA dimer.

The protein resides in the cytoplasm. Its function is as follows. One of the proteins required for the normal export of preproteins out of the cell cytoplasm. It is a molecular chaperone that binds to a subset of precursor proteins, maintaining them in a translocation-competent state. It also specifically binds to its receptor SecA. The chain is Protein-export protein SecB from Burkholderia orbicola (strain MC0-3).